Here is a 228-residue protein sequence, read N- to C-terminus: Aquaporin Z (228 aa).

2 consecutive transmembrane segments (helical) span residues 1–21 and 23–43; these read MLNK…GGCG and AILA…ALAF. An NPA 1 motif is present at residues 63–65; that stretch reads NPA. 3 helical membrane-spanning segments follow: residues 82-102, 129-149, and 154-174; these read IPYW…LYVI, MMAG…IILG, and LAPA…IHLV. Residues 184 to 186 carry the NPA 2 motif; sequence NPA. A helical transmembrane segment spans residues 205-225; sequence LFWVAPLVGAVIGAIIWKGLL.

The protein belongs to the MIP/aquaporin (TC 1.A.8) family. As to quaternary structure, homotetramer.

It is found in the cell inner membrane. The catalysed reaction is H2O(in) = H2O(out). Its function is as follows. Channel that permits osmotically driven movement of water in both directions. It is involved in the osmoregulation and in the maintenance of cell turgor during volume expansion in rapidly growing cells. It mediates rapid entry or exit of water in response to abrupt changes in osmolarity. The polypeptide is Aquaporin Z (Brucella melitensis biotype 1 (strain ATCC 23456 / CCUG 17765 / NCTC 10094 / 16M)).